Consider the following 156-residue polypeptide: Transcription elongation factor GreA (156 aa).

Residues 1-84 (MAKYTISKHR…IEDVLRSTDE (84 aa)) are a coiled coil.

This sequence belongs to the GreA/GreB family.

Necessary for efficient RNA polymerase transcription elongation past template-encoded arresting sites. The arresting sites in DNA have the property of trapping a certain fraction of elongating RNA polymerases that pass through, resulting in locked ternary complexes. Cleavage of the nascent transcript by cleavage factors such as GreA or GreB allows the resumption of elongation from the new 3'terminus. GreA releases sequences of 2 to 3 nucleotides. The polypeptide is Transcription elongation factor GreA (Ureaplasma parvum serovar 3 (strain ATCC 27815 / 27 / NCTC 11736)).